A 258-amino-acid chain; its full sequence is Deoxyribose-phosphate aldolase (258 aa).

The active-site Proton donor/acceptor is the Asp101. Lys166 acts as the Schiff-base intermediate with acetaldehyde in catalysis. Catalysis depends on Lys200, which acts as the Proton donor/acceptor.

The protein belongs to the DeoC/FbaB aldolase family. DeoC type 2 subfamily.

It localises to the cytoplasm. It catalyses the reaction 2-deoxy-D-ribose 5-phosphate = D-glyceraldehyde 3-phosphate + acetaldehyde. It participates in carbohydrate degradation; 2-deoxy-D-ribose 1-phosphate degradation; D-glyceraldehyde 3-phosphate and acetaldehyde from 2-deoxy-alpha-D-ribose 1-phosphate: step 2/2. Catalyzes a reversible aldol reaction between acetaldehyde and D-glyceraldehyde 3-phosphate to generate 2-deoxy-D-ribose 5-phosphate. The chain is Deoxyribose-phosphate aldolase from Actinobacillus pleuropneumoniae serotype 5b (strain L20).